The sequence spans 686 residues: Leucine-rich repeat-containing protein 49 (686 aa).

7 LRR repeats span residues 113-134 (HLRL…SNLQ), 135-156 (KLIS…STLR), 157-178 (CLRV…ENLK), 179-200 (SLDV…NHLC), 201-222 (ELRV…NGLD), 223-244 (SLTE…DNLP), and 245-266 (CLQH…SCLA). The LRRCT domain maps to 279–317 (NPIAQESWYKHTVLQNMMQLRQLDMKRITEEERRMASVL). A coiled-coil region spans residues 303-341 (MKRITEEERRMASVLAKKEEEKKRESHKQSLLKEKKRLT). A disordered region spans residues 360–388 (ATNEDRKDSDSPQDPCQIDGSTLSAFPEE).

In terms of assembly, part of the neuronal tubulin polyglutamylase complex which contains TPGS1, TPGS2, TTLL1, LRRC49 and NICN1. Interacts with PCM1; TTLL1, TPGS1, TPGS2 and LRRC49.

Its subcellular location is the cytoplasm. The protein resides in the cytoskeleton. The protein localises to the microtubule organizing center. It localises to the centrosome. It is found in the centriolar satellite. Subunit of the tubulin polyglutamylase complex (TPGC). The complex mediates cilia and flagella polyglutamylation which is essential for their biogenesis and motility. This Homo sapiens (Human) protein is Leucine-rich repeat-containing protein 49.